Reading from the N-terminus, the 317-residue chain is Beta-ketoacyl-[acyl-carrier-protein] synthase III (317 aa).

Residues C112 and H244 contribute to the active site. Positions 245 to 249 (QANLR) are ACP-binding. Residue N274 is part of the active site.

This sequence belongs to the thiolase-like superfamily. FabH family. In terms of assembly, homodimer.

It localises to the cytoplasm. It carries out the reaction malonyl-[ACP] + acetyl-CoA + H(+) = 3-oxobutanoyl-[ACP] + CO2 + CoA. It functions in the pathway lipid metabolism; fatty acid biosynthesis. Catalyzes the condensation reaction of fatty acid synthesis by the addition to an acyl acceptor of two carbons from malonyl-ACP. Catalyzes the first condensation reaction which initiates fatty acid synthesis and may therefore play a role in governing the total rate of fatty acid production. Possesses both acetoacetyl-ACP synthase and acetyl transacylase activities. Its substrate specificity determines the biosynthesis of branched-chain and/or straight-chain of fatty acids. This chain is Beta-ketoacyl-[acyl-carrier-protein] synthase III, found in Blochmanniella pennsylvanica (strain BPEN).